The primary structure comprises 81 residues: MDSITSAASVVAAGLAVGLGAIGPGLGQGNAAQGAVEGIARQPEAEGKIRGTLLLSFAFMESLTIYGLVVALVLLFANPFS.

A run of 2 helical transmembrane segments spans residues 7-27 and 57-77; these read AASV…PGLG and FAFM…LLFA.

Belongs to the ATPase C chain family. In terms of assembly, F-type ATPases have 2 components, F(1) - the catalytic core - and F(0) - the membrane proton channel. F(1) has five subunits: alpha(3), beta(3), gamma(1), delta(1), epsilon(1). F(0) has four main subunits: a(1), b(1), b'(1) and c(10-14). The alpha and beta chains form an alternating ring which encloses part of the gamma chain. F(1) is attached to F(0) by a central stalk formed by the gamma and epsilon chains, while a peripheral stalk is formed by the delta, b and b' chains.

The protein resides in the cellular thylakoid membrane. In terms of biological role, f(1)F(0) ATP synthase produces ATP from ADP in the presence of a proton or sodium gradient. F-type ATPases consist of two structural domains, F(1) containing the extramembraneous catalytic core and F(0) containing the membrane proton channel, linked together by a central stalk and a peripheral stalk. During catalysis, ATP synthesis in the catalytic domain of F(1) is coupled via a rotary mechanism of the central stalk subunits to proton translocation. Key component of the F(0) channel; it plays a direct role in translocation across the membrane. A homomeric c-ring of between 10-14 subunits forms the central stalk rotor element with the F(1) delta and epsilon subunits. This chain is ATP synthase subunit c, found in Prochlorococcus marinus (strain MIT 9301).